The primary structure comprises 172 residues: Protein-export protein SecB (172 aa).

The protein belongs to the SecB family. Homotetramer, a dimer of dimers. One homotetramer interacts with 1 SecA dimer.

The protein resides in the cytoplasm. In terms of biological role, one of the proteins required for the normal export of preproteins out of the cell cytoplasm. It is a molecular chaperone that binds to a subset of precursor proteins, maintaining them in a translocation-competent state. It also specifically binds to its receptor SecA. This Stenotrophomonas maltophilia (strain K279a) protein is Protein-export protein SecB.